A 181-amino-acid polypeptide reads, in one-letter code: Dual-action ribosomal maturation protein DarP (181 aa).

Residues 1–23 (MTGIKKPMSQYQDDNELEDWGPS) form a disordered region.

The protein belongs to the DarP family.

It is found in the cytoplasm. Functionally, member of a network of 50S ribosomal subunit biogenesis factors which assembles along the 30S-50S interface, preventing incorrect 23S rRNA structures from forming. Promotes peptidyl transferase center (PTC) maturation. This Aeromonas salmonicida (strain A449) protein is Dual-action ribosomal maturation protein DarP.